Here is a 348-residue protein sequence, read N- to C-terminus: Ileal sodium/bile acid cotransporter (348 aa).

Over 1–28 (MDNSSICNPNATICEGDSCIAPESNFNA) the chain is Extracellular. N-linked (GlcNAc...) asparagine glycans are attached at residues Asn3 and Asn10. A helical transmembrane segment spans residues 29-49 (ILSVVMSTVLTILLALVMFSM). Over 50-81 (GCNVELHKFLGHLRRPWGIVVGFLCQFGIMPL) the chain is Cytoplasmic. Residues 82–102 (TGFVLSVAFGILPVQAVVVLI) form a helical membrane-spanning segment. Topologically, residues 103–126 (QGCCPGGTASNILAYWVDGDMDLS) are extracellular. The helical transmembrane segment at 127 to 147 (VSMTTCSTLLALGMMPLCLFI) threads the bilayer. Over 148 to 157 (YTKMWVDSGT) the chain is Cytoplasmic. The chain crosses the membrane as a helical span at residues 158–178 (IVIPYDSIGTSLVALVIPVSI). The Extracellular segment spans residues 179–195 (GMYVNHKWPQKAKIILK). Residues 196 to 216 (IGSIAGAILIVLIAVVGGILY) traverse the membrane as a helical segment. The Cytoplasmic portion of the chain corresponds to 217–224 (QSAWTIEP). Residues 225–245 (KLWIIGTIYPIAGYGLGFFLA) traverse the membrane as a helical segment. Residues 246-284 (RIAGQPWYRCRTVALETGLQNTQLCSTIVQLSFSPEDLN) are Extracellular-facing. A helical transmembrane segment spans residues 285–305 (LVFTFPLIYSIFQIAFAAILL). Residues 306 to 348 (GAYVAYKKCHGKNNTELQEKTDNEMEPRSSFQETNKGFQPDEK) lie on the Cytoplasmic side of the membrane. Over residues 322 to 332 (LQEKTDNEMEP) the composition is skewed to basic and acidic residues. Residues 322 to 348 (LQEKTDNEMEPRSSFQETNKGFQPDEK) are disordered. Residue Ser335 is modified to Phosphoserine.

This sequence belongs to the bile acid:sodium symporter (BASS) (TC 2.A.28) family. In terms of assembly, monomer and homodimer. In terms of tissue distribution, mainly expressed in ileum and kidney, lower expression in jejunum.

Its subcellular location is the membrane. The catalysed reaction is taurocholate(out) + 2 Na(+)(out) = taurocholate(in) + 2 Na(+)(in). It carries out the reaction cholate(out) + 2 Na(+)(out) = cholate(in) + 2 Na(+)(in). It catalyses the reaction taurochenodeoxycholate(out) + 2 Na(+)(out) = taurochenodeoxycholate(in) + 2 Na(+)(in). The enzyme catalyses tauroursodeoxycholate(out) + 2 Na(+)(out) = tauroursodeoxycholate(in) + 2 Na(+)(in). The catalysed reaction is glycocholate(out) + 2 Na(+)(out) = glycocholate(in) + 2 Na(+)(in). It carries out the reaction tauronorcholate(out) + 2 Na(+)(out) = tauronorcholate(in) + 2 Na(+)(in). It catalyses the reaction tauroallocholate(out) + 2 Na(+)(out) = tauroallocholate(in) + 2 Na(+)(in). The enzyme catalyses taurodeoxycholate(out) + 2 Na(+)(out) = taurodeoxycholate(in) + 2 Na(+)(in). The catalysed reaction is tauro-beta-muricholate(out) + 2 Na(+)(out) = tauro-beta-muricholate(in) + 2 Na(+)(in). Functionally, plays a critical role in the sodium-dependent reabsorption of bile acids from the lumen of the small intestine. Transports various bile acids, unconjugated or conjugated, such as cholate and taurocholate. Also responsible for bile acid transport in the renal proximal tubules, a salvage mechanism that helps conserve bile acids. Works collaboratively with the Na(+)-taurocholate cotransporting polypeptide (NTCP), the organic solute transporter (OST), and the bile salt export pump (BSEP), to ensure efficacious biological recycling of bile acids during enterohepatic circulation. The polypeptide is Ileal sodium/bile acid cotransporter (SLC10A2) (Cricetulus griseus (Chinese hamster)).